A 219-amino-acid polypeptide reads, in one-letter code: Izumo sperm-egg fusion protein 4 (219 aa).

The first 15 residues, 1-15, serve as a signal peptide directing secretion; the sequence is MALLLCLVGVTAALA. Asn206 carries N-linked (GlcNAc...) asparagine glycosylation.

Belongs to the Izumo family.

It is found in the secreted. The polypeptide is Izumo sperm-egg fusion protein 4 (IZUMO4) (Macaca fascicularis (Crab-eating macaque)).